Reading from the N-terminus, the 552-residue chain is DnaJ homolog subfamily C member 1 (552 aa).

An N-terminal signal peptide occupies residues 1–43 (MWVPGFGSARLPQRRRSGLESSSVRPLWLLLLFLLAAVRPVRA). The Lumenal segment spans residues 44–149 (WESGDLELFD…RRVRKMSNAE (106 aa)). Positions 56–129 (EEVQLNFYEF…RYDDVLINGL (74 aa)) constitute a J domain. Residues 150 to 170 (LALLLFIILTVGHYAVVWSIY) form a helical membrane-spanning segment. The Cytoplasmic segment spans residues 171 to 552 (LEKQLDELLG…LVQKKKQAKS (382 aa)). In terms of domain architecture, SANT 1 spans 323 to 377 (RQAPEWTEEDLSQLTRSMVKFPGGTPGRWDKIAHELGRSVTDVTTKAKELKDSVT). Positions 370-495 (KELKDSVTSS…ERTRAAEEAW (126 aa)) are disordered. Residue Ser-379 is modified to Phosphoserine. The span at 419–431 (MEDEEHEAAEGEQ) shows a compositional bias: acidic residues. Positions 453 to 470 (TRVEPEEKLRGKRQKDFD) are enriched in basic and acidic residues. Residues Ser-477 and Ser-478 each carry the phosphoserine modification. Positions 480 to 492 (EEKQRKERTRAAE) are enriched in basic and acidic residues. The 56-residue stretch at 490–545 (AAEEAWTQSQQKLLELALQQYPKGASDRWDKIAKCVPSKSKEDCIARYKLLVELVQ) folds into the SANT 2 domain.

Interacts (via J domain) with HSPA5. Interacts (via cytosolic domain) with ribosomes. Interacts (via SANT 2 domain) with SERPINA3; the interaction delays the formation of the covalent inhibitory complex SERPINA3-chymotrypsin, but does not alter the catalytic activity of SERPINA3. Interacts (via SANT 2 domain) with ITIH4 (via C-terminus); the interaction protects ITIH4 against in vitro cleavage by kallikrein. As to expression, widely expressed.

The protein resides in the endoplasmic reticulum membrane. The protein localises to the nucleus membrane. It localises to the microsome membrane. Its function is as follows. May modulate protein synthesis. In Mus musculus (Mouse), this protein is DnaJ homolog subfamily C member 1 (Dnajc1).